The following is a 329-amino-acid chain: Replication factor C small subunit 1 (329 aa).

44–51 contacts ATP; that stretch reads GPPGTGKT.

It belongs to the activator 1 small subunits family. RfcS subfamily. In terms of assembly, heteromultimer composed of small subunits (RfcS) and large subunits (RfcL).

Functionally, part of the RFC clamp loader complex which loads the PCNA sliding clamp onto DNA. The chain is Replication factor C small subunit 1 from Pyrobaculum aerophilum (strain ATCC 51768 / DSM 7523 / JCM 9630 / CIP 104966 / NBRC 100827 / IM2).